We begin with the raw amino-acid sequence, 207 residues long: Large ribosomal subunit protein uL4 (207 aa).

The segment at 44 to 78 is disordered; sequence QRQGTHDVKNRSEVRGGGRKPWRQKGTGRARQGSI. Over residues 47–59 the composition is skewed to basic and acidic residues; the sequence is GTHDVKNRSEVRG. Positions 60 to 71 are enriched in basic residues; that stretch reads GGRKPWRQKGTG.

This sequence belongs to the universal ribosomal protein uL4 family. Part of the 50S ribosomal subunit.

Functionally, one of the primary rRNA binding proteins, this protein initially binds near the 5'-end of the 23S rRNA. It is important during the early stages of 50S assembly. It makes multiple contacts with different domains of the 23S rRNA in the assembled 50S subunit and ribosome. In terms of biological role, forms part of the polypeptide exit tunnel. The sequence is that of Large ribosomal subunit protein uL4 from Brevibacillus brevis (strain 47 / JCM 6285 / NBRC 100599).